The chain runs to 162 residues: Large ribosomal subunit protein uL30 (162 aa).

This sequence belongs to the universal ribosomal protein uL30 family. As to quaternary structure, part of the 50S ribosomal subunit.

The chain is Large ribosomal subunit protein uL30 from Korarchaeum cryptofilum (strain OPF8).